A 334-amino-acid chain; its full sequence is Glyceraldehyde-3-phosphate dehydrogenase (334 aa).

NAD(+) is bound by residues 12–13 (TI) and Gly111. A D-glyceraldehyde 3-phosphate-binding site is contributed by 140–142 (SCN). Cys141 acts as the Nucleophile in catalysis. Arg167 contributes to the NAD(+) binding site. 192–193 (HG) contributes to the D-glyceraldehyde 3-phosphate binding site. Position 298 (Gln298) interacts with NAD(+).

It belongs to the glyceraldehyde-3-phosphate dehydrogenase family. In terms of assembly, homotetramer.

The protein localises to the encapsulin nanocompartment. The catalysed reaction is D-glyceraldehyde 3-phosphate + phosphate + NADP(+) = (2R)-3-phospho-glyceroyl phosphate + NADPH + H(+). The enzyme catalyses D-glyceraldehyde 3-phosphate + phosphate + NAD(+) = (2R)-3-phospho-glyceroyl phosphate + NADH + H(+). It participates in carbohydrate degradation; glycolysis; pyruvate from D-glyceraldehyde 3-phosphate: step 1/5. Its function is as follows. Possible cargo protein of a type 4B encapsulin nanocompartment. Active in the presence of NAD and NADP, prefers NADP. This chain is Glyceraldehyde-3-phosphate dehydrogenase (gap), found in Pyrococcus furiosus (strain ATCC 43587 / DSM 3638 / JCM 8422 / Vc1).